A 157-amino-acid chain; its full sequence is Protein TIFY 8 (157 aa).

The region spanning 33 to 68 (VPGTTEQLTIFYSGSMVKFDNVPREKIRYACRLRRL) is the Tify domain. The tract at residues 126–147 (SIGAQRTGTPPSRRRIHARGKS) is disordered. Basic residues predominate over residues 137-147 (SRRRIHARGKS).

Belongs to the TIFY/JAZ family. In terms of processing, ubiquitinated. Targeted for degradation by the SCF(COI1) E3 ubiquitin ligase-proteasome pathway during jasmonate signaling.

Its function is as follows. Repressor of jasmonate responses. The polypeptide is Protein TIFY 8 (Oryza sativa subsp. japonica (Rice)).